A 126-amino-acid chain; its full sequence is NADH-quinone oxidoreductase subunit A (126 aa).

A run of 3 helical transmembrane segments spans residues 16-36, 73-93, and 95-115; these read ILVL…AAAI, ILFI…VAFG, and MSMT…VGFA.

It belongs to the complex I subunit 3 family. As to quaternary structure, NDH-1 is composed of 14 different subunits. Subunits NuoA, H, J, K, L, M, N constitute the membrane sector of the complex.

It localises to the cell inner membrane. It catalyses the reaction a quinone + NADH + 5 H(+)(in) = a quinol + NAD(+) + 4 H(+)(out). Functionally, NDH-1 shuttles electrons from NADH, via FMN and iron-sulfur (Fe-S) centers, to quinones in the respiratory chain. The immediate electron acceptor for the enzyme in this species is believed to be ubiquinone. Couples the redox reaction to proton translocation (for every two electrons transferred, four hydrogen ions are translocated across the cytoplasmic membrane), and thus conserves the redox energy in a proton gradient. The polypeptide is NADH-quinone oxidoreductase subunit A (Rhodobacter capsulatus (Rhodopseudomonas capsulata)).